The chain runs to 387 residues: Ubiquitin-conjugating enzyme E2 25 (387 aa).

A disordered region spans residues 117–164; the sequence is APPVRDDIDEGRGSDISDTTSEPIDDDMAGDGEVDDDDEEEEDDEDAD. Basic and acidic residues predominate over residues 120 to 131; that stretch reads VRDDIDEGRGSD. The segment covering 139–164 has biased composition (acidic residues); that stretch reads PIDDDMAGDGEVDDDDEEEEDDEDAD. Residues 214-380 form the UBC core domain; sequence TATDRLMKEI…QQIHAKSGWY (167 aa). The active-site Glycyl thioester intermediate is C315.

The protein belongs to the ubiquitin-conjugating enzyme family. As to expression, in the embryo, expressed in precursor neuron and muscle cells and in other cells such as hypodermal cells. After hatching of L1 larvae and in all subsequent stages, strongest expression in pharyngeal muscle and anal muscle cells. In L4 larvae and adolescent hermaphrodites, also expressed in the vulval muscles. Expression also detected in all four nerve cords and in neurons with weaker levels in all body wall muscles.

It is found in the cytoplasm. It localises to the nucleus. The catalysed reaction is S-ubiquitinyl-[E1 ubiquitin-activating enzyme]-L-cysteine + [E2 ubiquitin-conjugating enzyme]-L-cysteine = [E1 ubiquitin-activating enzyme]-L-cysteine + S-ubiquitinyl-[E2 ubiquitin-conjugating enzyme]-L-cysteine.. It functions in the pathway protein modification; protein ubiquitination. Its function is as follows. Catalyzes the covalent attachment of ubiquitin to other proteins (Potential). Required for the maintenance of neuromuscular function. In Caenorhabditis elegans, this protein is Ubiquitin-conjugating enzyme E2 25.